The following is a 635-amino-acid chain: Protein NSP-INTERACTING KINASE 2 (635 aa).

An N-terminal signal peptide occupies residues 1–32; sequence MLQGRREAKKSYALFSSTFFFFFICFLSSSSA. Residues 33-248 are Extracellular-facing; it reads ELTDKGVNFE…DGGTKNRKIA (216 aa). N-linked (GlcNAc...) asparagine glycans are attached at residues Asn-92 and Asn-103. 4 LRR repeats span residues 104-128, 129-153, 155-176, and 177-200; these read LTNL…IGKL, MKLK…SYSK, LQYL…LANM, and TQLT…LAKT. N-linked (GlcNAc...) asparagine glycans are attached at residues Asn-140, Asn-162, Asn-175, Asn-188, Asn-219, Asn-231, and Asn-235. The interval 214 to 242 is disordered; it reads TEKDCNGTQPKPMSITLNSSQNKSSDGGT. Positions 219-241 are enriched in polar residues; sequence NGTQPKPMSITLNSSQNKSSDGG. Residues 249-269 traverse the membrane as a helical segment; sequence VVFGVSLTCVCLLIIGFGFLL. The Cytoplasmic segment spans residues 270–635; it reads WWRRRHNKQV…VQAMELSGPR (366 aa). Phosphothreonine is present on Thr-309. A Protein kinase domain is found at 312 to 591; the sequence is FSSKNLVGKG…EGDGLVEKWE (280 aa). ATP is bound by residues 318–326 and Lys-340; that span reads VGKGGFGNV. A phosphoserine mark is found at Ser-393 and Ser-396. Thr-408 carries the phosphothreonine modification. Positions 422–502 are interaction with geminivirus NSP protein; that stretch reads YLHEQCDPKI…DVFGFGILLL (81 aa). Catalysis depends on Asp-435, which acts as the Proton acceptor. Phosphothreonine occurs at positions 468, 469, and 474. Position 482 is a phosphotyrosine (Tyr-482). Ser-484 carries the phosphoserine modification. Thr-485 carries the post-translational modification Phosphothreonine. Position 489 is a phosphoserine (Ser-489). Residue Thr-564 is modified to Phosphothreonine. A compositionally biased stretch (polar residues) spans 593–613; it reads SSQRAETNRSYSKPNEFSSSE. The interval 593–621 is disordered; it reads SSQRAETNRSYSKPNEFSSSERYSDLTDD.

The protein belongs to the protein kinase superfamily. Ser/Thr protein kinase family. Oligomer. Interacts with geminivirus nuclear shuttle protein (NSP). Autophosphorylated. As to expression, expressed in flowers and roots.

The protein localises to the cell membrane. The enzyme catalyses L-seryl-[protein] + ATP = O-phospho-L-seryl-[protein] + ADP + H(+). It catalyses the reaction L-threonyl-[protein] + ATP = O-phospho-L-threonyl-[protein] + ADP + H(+). With respect to regulation, inhibited by the viral nuclear shuttle protein (NSP) that binds to the region required for oligomerization. Involved in defense response to geminivirus infection. Phosphorylates RPL10A in vitro. In Arabidopsis thaliana (Mouse-ear cress), this protein is Protein NSP-INTERACTING KINASE 2 (NIK2).